We begin with the raw amino-acid sequence, 649 residues long: Solute carrier family 22 member 17 (649 aa).

A disordered region spans residues 1–70 (MAPRVATGTP…GGDGLGSSLS (70 aa)). A compositionally biased stretch (polar residues) spans 24-34 (VEITPTSNGQV). Over residues 47-57 (QGEREREREGE) the composition is skewed to basic and acidic residues. Asn134 and Asn143 each carry an N-linked (GlcNAc...) asparagine glycan. 11 helical membrane-spanning segments follow: residues 211–231 (VILE…FLGY), 240–260 (GIVL…AAAG), 265–285 (VMAL…GVYL), 300–320 (ALAG…LALV), 330–350 (MITA…FLES), 414–433 (NIWK…HAIR), 448–468 (FYLC…FLGV), 477–497 (GILL…LGLW), 526–546 (FSVL…LLAA), 557–577 (GLGL…AQRL), and 584–604 (FLQH…IMLL).

This sequence belongs to the major facilitator (TC 2.A.1) superfamily. Organic cation transporter (TC 2.A.1.19) family. As to expression, expressed in brain.

Its subcellular location is the cell membrane. The protein localises to the vacuole membrane. In terms of biological role, cell surface receptor for LCN2 (24p3) that plays a key role in iron homeostasis and transport. Able to bind iron-bound LCN2 (holo-24p3), followed by internalization of holo-24p3 and release of iron, thereby increasing intracellular iron concentration and leading to inhibition of apoptosis. Also binds iron-free LCN2 (apo-24p3), followed by internalization of apo-24p3 and its association with an intracellular siderophore, leading to iron chelation and iron transfer to the extracellular medium, thereby reducing intracellular iron concentration and resulting in apoptosis. In Homo sapiens (Human), this protein is Solute carrier family 22 member 17 (SLC22A17).